A 126-amino-acid chain; its full sequence is MNSGGFIQENFSIFQASHEGSWAILAILFLVAYFLFRGGKSKAGTIIHMIARLFFVIMLVTGASMLIAYQFAYFFFIKGILAVLLIGFMEAALGKAKRNENSLGMLFAVLVVLVVIVLMGYGIIRF.

Transmembrane regions (helical) follow at residues 16–36 (ASHE…YFLF), 43–63 (AGTI…VTGA), 66–86 (LIAY…VLLI), and 104–124 (GMLF…YGII).

The protein belongs to the UPF0344 family.

Its subcellular location is the cell membrane. This Shouchella clausii (strain KSM-K16) (Alkalihalobacillus clausii) protein is UPF0344 protein ABC2900.